The chain runs to 115 residues: UPF0738 protein SAB0871 (115 aa).

This sequence belongs to the UPF0738 family.

This chain is UPF0738 protein SAB0871, found in Staphylococcus aureus (strain bovine RF122 / ET3-1).